Reading from the N-terminus, the 95-residue chain is MSFKFEAEVRSAQGKGASRRLRHNGQVPAIIYGGNAEPVSIILDHDKVNNVQIHDAFYNEVLTIVLAEKEVQVKVQAIQRHPTKPKLLHLDFKRV.

The protein belongs to the bacterial ribosomal protein bL25 family. As to quaternary structure, part of the 50S ribosomal subunit; part of the 5S rRNA/L5/L18/L25 subcomplex. Contacts the 5S rRNA. Binds to the 5S rRNA independently of L5 and L18.

In terms of biological role, this is one of the proteins that binds to the 5S RNA in the ribosome where it forms part of the central protuberance. In Haemophilus ducreyi (strain 35000HP / ATCC 700724), this protein is Large ribosomal subunit protein bL25.